The primary structure comprises 213 residues: MTMIGVIDYGMGNLYSVSKALERLGCPYIVSGDKEELARVRGLILPGVGSFRDAMHILRETGLADFIRSAVQDGTPLLGICLGMQLLFDESEENGPTEGLGLLRGRVVRFPGVTNDGEPYKVPHMGWNRLRFHRSSPLLDGVEEGHVYFVHSYYVVPGEEEVVLASSEYDVDVPAVVGRDNVFGTQFHPEKSGAVGMSILNRYVGIVTGRENG.

One can recognise a Glutamine amidotransferase type-1 domain in the interval 3–213 (MIGVIDYGMG…VGIVTGRENG (211 aa)). The Nucleophile role is filled by C81. Catalysis depends on residues H188 and E190.

Heterodimer of HisH and HisF.

Its subcellular location is the cytoplasm. It catalyses the reaction 5-[(5-phospho-1-deoxy-D-ribulos-1-ylimino)methylamino]-1-(5-phospho-beta-D-ribosyl)imidazole-4-carboxamide + L-glutamine = D-erythro-1-(imidazol-4-yl)glycerol 3-phosphate + 5-amino-1-(5-phospho-beta-D-ribosyl)imidazole-4-carboxamide + L-glutamate + H(+). It carries out the reaction L-glutamine + H2O = L-glutamate + NH4(+). It participates in amino-acid biosynthesis; L-histidine biosynthesis; L-histidine from 5-phospho-alpha-D-ribose 1-diphosphate: step 5/9. IGPS catalyzes the conversion of PRFAR and glutamine to IGP, AICAR and glutamate. The HisH subunit catalyzes the hydrolysis of glutamine to glutamate and ammonia as part of the synthesis of IGP and AICAR. The resulting ammonia molecule is channeled to the active site of HisF. This chain is Imidazole glycerol phosphate synthase subunit HisH, found in Geobacillus thermodenitrificans (strain NG80-2).